The chain runs to 241 residues: Putative inactive serine protease 58 (241 aa).

A signal peptide spans 1–17 (MKLAFLCILSTLLRTFA). Residues 18–239 (YNPDHIAGTT…YLPWIEDTMK (222 aa)) form the Peptidase S1 domain. A disulfide bond links Cys-41 and Cys-57. Residues His-56 and Asp-101 each act as charge relay system in the active site. Intrachain disulfides connect Cys-133–Cys-201, Cys-165–Cys-180, and Cys-191–Cys-215. N-linked (GlcNAc...) asparagine glycosylation is present at Asn-156.

This sequence belongs to the peptidase S1 family.

Its subcellular location is the secreted. It catalyses the reaction Preferential cleavage: Arg-|-Xaa, Lys-|-Xaa.. This chain is Putative inactive serine protease 58 (Prss58), found in Mus musculus (Mouse).